The sequence spans 474 residues: Cyclin-dependent kinase 2 homolog (474 aa).

One can recognise a Protein kinase domain in the interval 7–446; that stretch reads YRHVVKLGEG…AAEAVHHPYL (440 aa). ATP contacts are provided by residues 13-21 and Lys36; that span reads LGEGTYGMV. Thr17 is subject to Phosphothreonine. Tyr18 is subject to Phosphotyrosine. Residue Asp131 is the Proton acceptor of the active site. Residues 150–200 form a disordered region; sequence TALPSSPQQSMRVPHAGGTNGEAGRASANGNEHAPRPTAAEGSVSPWEEAA. Ser230 carries the phosphoserine modification. Over residues 334–354 the composition is skewed to low complexity; that stretch reads QQLQAQQQQPQQGSSPSHSSS. Residues 334–356 form a disordered region; that stretch reads QQLQAQQQQPQQGSSPSHSSSRA.

This sequence belongs to the protein kinase superfamily. CMGC Ser/Thr protein kinase family. CDC2/CDKX subfamily. May form a complex composed of at least the catalytic subunit CRK2 and a cyclin. Requires Mg(2+) as cofactor.

It is found in the cytoplasm. It catalyses the reaction L-seryl-[protein] + ATP = O-phospho-L-seryl-[protein] + ADP + H(+). The catalysed reaction is L-threonyl-[protein] + ATP = O-phospho-L-threonyl-[protein] + ADP + H(+). It carries out the reaction [DNA-directed RNA polymerase] + ATP = phospho-[DNA-directed RNA polymerase] + ADP + H(+). Its activity is regulated as follows. Phosphorylation at Thr-17 or Tyr-18 inactivates the enzyme, while phosphorylation at Ser-230 activates it. In terms of biological role, serine/threonine-protein kinase. Involved in the control of the cell cycle. Required for entry into S-phase and mitosis. Probable component of the kinase complex that phosphorylates the repetitive C-terminus of RNA polymerase II. The protein is Cyclin-dependent kinase 2 homolog of Crithidia fasciculata.